The following is an 80-amino-acid chain: Trefoil factor 3 (80 aa).

An N-terminal signal peptide occupies residues Met1–Ala21. One can recognise a P-type domain in the interval Asn30 to Leu73. Intrachain disulfides connect Cys32-Cys58, Cys42-Cys57, and Cys52-Cys69.

Monomer. Homodimer; disulfide-linked. As to expression, expressed in goblet cells of the intestines and colon (at protein level). Expressed by goblet cells of small and large intestinal epithelia and also by the uterus. Also expressed in the hypothalamus where it is detected in paraventricular, periventricular and supraoptic nuclei (at protein level).

It is found in the secreted. The protein localises to the extracellular space. Its subcellular location is the extracellular matrix. The protein resides in the cytoplasm. Involved in the maintenance and repair of the intestinal mucosa. Promotes the mobility of epithelial cells in healing processes (motogen). The polypeptide is Trefoil factor 3 (TFF3) (Homo sapiens (Human)).